The sequence spans 66 residues: Ocellatin-PT4 (66 aa).

Residues 1 to 22 form the signal peptide; sequence MAFLKKSLFLVLFLGLVSLSIC. A propeptide spanning residues 23 to 39 is cleaved from the precursor; it reads DEEKRQDEDDDDDDDEE. Val-66 carries the valine amide modification.

As to expression, expressed by the skin glands.

The protein localises to the secreted. In terms of biological role, has antibacterial activity against Gram-negative bacteria E.coli ATCC 25922 (MIC=80 uM), K.pneumoniae ATCC 700603 (MIC=310 uM) and S.choleraesuis ATCC 14028 (MIC=310 uM). Shows no hemolytic activity and no cytotoxicity. The chain is Ocellatin-PT4 from Leptodactylus pustulatus (Ceara white-lipped frog).